Here is a 261-residue protein sequence, read N- to C-terminus: Indole-3-glycerol phosphate synthase (261 aa).

The protein belongs to the TrpC family.

The enzyme catalyses 1-(2-carboxyphenylamino)-1-deoxy-D-ribulose 5-phosphate + H(+) = (1S,2R)-1-C-(indol-3-yl)glycerol 3-phosphate + CO2 + H2O. It functions in the pathway amino-acid biosynthesis; L-tryptophan biosynthesis; L-tryptophan from chorismate: step 4/5. The chain is Indole-3-glycerol phosphate synthase from Burkholderia pseudomallei (strain 668).